Here is a 242-residue protein sequence, read N- to C-terminus: Ribonuclease HII (242 aa).

The region spanning 21 to 234 (KIIVGLDEAG…SKNLLKEIEE (214 aa)) is the RNase H type-2 domain. The a divalent metal cation site is built by aspartate 27, glutamate 28, and aspartate 128.

Belongs to the RNase HII family. Requires Mn(2+) as cofactor. It depends on Mg(2+) as a cofactor.

The protein resides in the cytoplasm. The enzyme catalyses Endonucleolytic cleavage to 5'-phosphomonoester.. Its function is as follows. Endonuclease that specifically degrades the RNA of RNA-DNA hybrids. The protein is Ribonuclease HII of Methanococcus maripaludis (strain DSM 14266 / JCM 13030 / NBRC 101832 / S2 / LL).